A 70-amino-acid polypeptide reads, in one-letter code: Venom antimicrobial peptide-6 (70 aa).

A signal peptide spans 1–23 (MKSQTFFLLFLVVFLLAITQSEA). A Phenylalanine amide modification is found at Phe-36. Residues 40–70 (SLRDMDTMKYLYDPSLSAADLKTLQKLMENY) constitute a propeptide that is removed on maturation.

Belongs to the non-disulfide-bridged peptide (NDBP) superfamily. Short antimicrobial peptide (group 4) family. Expressed by the venom gland.

The protein localises to the secreted. The protein resides in the target cell membrane. Its function is as follows. Amphipathic peptide that exhibits extensive cytolytic activities against both prokaryotic and eukaryotic cells. Is more potent against Gram-positive bacteria (lethal concentration (LC)=0.25-2.9 uM) than against Gram-negative bacteria (LC=6.2-&gt;50 uM), and fungi ((LC)=14.1-&gt;50 uM). Shows hemolytic activity against rabbit erythrocytes (37.7% of inhibition at 6.25 uM) and cytolysis against rat dorsal root ganglions. In vivo, intravenous injection into mice tail provokes uncomfortable symptoms with a death rate of 12.5%. This Mesobuthus eupeus (Lesser Asian scorpion) protein is Venom antimicrobial peptide-6.